The chain runs to 2009 residues: MSLGLAGSLQAQLALEIVIQSLENCVLGPNQEKSLSVQNRVQDFQGASLLVCAREVIASNLSRPETPAPLQVPEMASLLSLQEENQLLQQELSRVEDLLAQSRAERDELAIKYNAVNERLEQAVRLETGELEAQEPRGLVRQSVELRRQLQEEQSSYRRKLQAYQEGQQRQAQLVQRLQAKILQYKKQCSELEKQLMDRSTELEQQRLRDTEHSQDLDSALLRLEEEQQRSASLAQVNAMLREQLDQANLANQALSEDIRKVTSDWTRSCKELEQREAVWRREEESFNTYFSSEHSRLLRLWRQVMGLRRQASEVKMGTERDLLQLGGELVRTSRAVQELGLGLSASLHRAESKAEAALEKQKLLQAQLEEQLQAKLLREKDLAQLQVQSDLDKADLSARVTELALSVEHLQNQNSEKDQVNRTLSDKLEALESLRLQEQTTLDTEDGEGLQQTLRDLAQAALSDTESGVQLSSSERTADTSDGSLRGFSGQRTPTPPRHSPGRGRSPRRGLSPACSDSSTLTLIHSALHKRQLQVQDMRGRYEASQELLGSVRKQLSDSEGERRGLEEQLQRLRDQTAASAQAQEDAQREAQRLRSANELLSREKGNLTHSLQVTQQQAKELRQELEKLQAAQEELKRQHNQLEDAQEDSVQEGARARRELERSHRQLEQLEVKRSGLTKELVEVREALSCAILQRDVLQTEKAEVAEALTKAEAGRAQLELSLTKLRAEEASLRDSLSKMSALNESLAQDKLELNRLIAQLEEEKVALLGRQQQAEHATTMAVEKQELLEQLRLEQEVERQGLQGSLCVAEQAREALEQQILVLRSERSHLQEQLAQLSRQLSGRDQELEQALRESQRQVEALERAAREKEAMAKERAGLAVKLAAAEREGRTLSEEAIRLRLEKEALESSLFDVQRQLAQLEARREQLEADSQALLLAKETLTGELAGLRQQVTSTEEKAALDKELMTQKLVQAEREAQASLREQRAAHEEDLQRLQHEKEAAWRELQAERAQLQGQLQQEREELLARMEAEKEELSKEIAALQQERDEGLLLAESEKQQALSLKESEKTALSEKLMGTRHSLAAISLEMERQKRDAQSRQEQDRNTLNALTSELRDLRAQLEEATAAHAQTVKELEERTGNLGRQREACMREAEELRTQLRVLEDTRDGLRRELLEAQRKGRDSQDSSEAHRQEASELRRSLSEGAKEREALRRSNEELRSAVKKAESERISLKLANEDKEQKLALLEEARVSVAKEAGELRASLQEVERSRLEARRELQELRRQMKTLDSDNGRLGRELADLQGRLALGERTEKESRREALGLRQRLLKGESSLEALKQELQGSQRKLQEQEAEFRARERGLLGSLEEARGAEKRLLDSARSLELRLEAVRAETSELGLRLSAAEGRAQGLEVELARVEAQRRVAEAQLGGLRSALRRGLGLGRVSSSPAREAPAGGSGDGLSSPSPLEYSPRSQPPSPGLIASPAPPDLDPEAVRDALRDFLQELRSAQRERDELKVQTSTLSQQLVEMEAERDHAASRAKQLQKAVAESEEAWRSADRRLSGAQAELALQEESVRRSKRECRATLDQMAVLERSLQATESELRASQEKVSKMKATEAKLESDKRRLKEVLDASESRSIKLELQRRALEGELQRSRLGLGDREAHAQALQDRVDSLQRQVADSEVKAGTLQLTVERLSGALAKVEESEGNLRSKVQSLTDALTQSSASLSSTQDKNLHLQKALSTCEHDRQVLQERLDAARQALSEARRQSSSLGEQVQTLRGELASLELQRGDAEGQLQQLQQALRQRQEGEAMALRSVQKLQEERRLLQERLGSLQRALAQLEAEKRDLERSALQFDKDRVALRKTLDKVEREKLRSHEDTLRLNAERGRLDRTLTGAELDLAEAQQQIQHLEAQVDVALEGNHNPVQPEAGEQQLELQQEVERLRSAQVQTERTLEARERAHRQRVSGLEEQVSTLKAQLHQELRRSSASVSLPPGTPEK.

Coiled-coil stretches lie at residues 74-265 (EMAS…VTSD) and 346-438 (ASLH…LRLQ). Disordered regions lie at residues 462 to 519 (ALSD…CSDS), 575 to 594 (RDQTAASAQAQEDAQREAQR), 636 to 665 (ELKRQHNQLEDAQEDSVQEGARARRELERS), 1180 to 1225 (EAQR…ELRS), and 1448 to 1501 (GRVS…EAVR). The segment covering 463–484 (LSDTESGVQLSSSERTADTSDG) has biased composition (polar residues). Coiled-coil stretches lie at residues 550-1058 (LGSV…LLAE) and 1091-1439 (LEME…GLRS). Over residues 577–586 (QTAASAQAQE) the composition is skewed to low complexity. The span at 656–665 (ARARRELERS) shows a compositional bias: basic and acidic residues. Ser-1453, Ser-1463, and Ser-1469 each carry phosphoserine. At Tyr-1475 the chain carries Phosphotyrosine. Ser-1476, Ser-1479, Ser-1483, Ser-1489, and Ser-1568 each carry phosphoserine. Over residues 1479 to 1494 (SQPPSPGLIASPAPPD) the composition is skewed to pro residues. Coiled-coil stretches lie at residues 1498–1697 (EAVR…GTLQ) and 1744–1998 (HLQK…RSSA). Positions 1957–2009 (QVQTERTLEARERAHRQRVSGLEEQVSTLKAQLHQELRRSSASVSLPPGTPEK) are disordered.

The protein belongs to the rootletin family. As to quaternary structure, homomer. Interacts with KLC3, NEK2 and the N-terminus of CEP250. Interacts with CEP44. In terms of processing, phosphorylated by NEK2 which may regulate its association with centrosomes. As to expression, highest expression detected in photoreceptor cells of retina. Expressed at lower levels in brain, trachea and kidney. Detected in all major ciliated epithelia. During embryonic development, enriched along the apical domains of neuroepithelium in brain ventricular zone, in primordia of retinal pigment epithelia and in neural retina.

The protein localises to the cytoplasm. The protein resides in the cytoskeleton. Its subcellular location is the microtubule organizing center. It localises to the centrosome. It is found in the centriole. The protein localises to the cilium basal body. In terms of biological role, major structural component of the ciliary rootlet, a cytoskeletal-like structure in ciliated cells which originates from the basal body at the proximal end of a cilium and extends proximally toward the cell nucleus. Furthermore, is required for the correct positioning of the cilium basal body relative to the cell nucleus, to allow for ciliogenesis. Contributes to centrosome cohesion before mitosis. The polypeptide is Rootletin (Mus musculus (Mouse)).